The chain runs to 1190 residues: PAN2-PAN3 deadenylation complex catalytic subunit PAN2 (1190 aa).

WD repeat units follow at residues 24–63 (TTIV…NSLY), 129–166 (NKFN…PNVL), 167–207 (SSFD…TMKT), 222–264 (GNYI…AIAP), 266–306 (PFPA…NVYL), and 322–361 (NNKP…KDFV). Residues 364–511 (PQPVEQPDII…FQYKFQGKLN (148 aa)) are linker. In terms of domain architecture, USP spans 512–924 (KVPNCYSRLQ…KPIVIMYQQT (413 aa)). The Exonuclease domain occupies 988–1158 (VAIDAEFVML…EDANTALLLY (171 aa)). The a divalent metal cation site is built by aspartate 991, glutamate 993, aspartate 1097, and aspartate 1150.

It belongs to the peptidase C19 family. PAN2 subfamily. In terms of assembly, forms a heterotrimer with an asymmetric homodimer of the regulatory subunit PAN3 to form the poly(A)-nuclease (PAN) deadenylation complex. The cofactor is a divalent metal cation.

Its subcellular location is the cytoplasm. It carries out the reaction Exonucleolytic cleavage of poly(A) to 5'-AMP.. Its activity is regulated as follows. Positively regulated by the regulatory subunit PAN3. Its function is as follows. Catalytic subunit of the poly(A)-nuclease (PAN) deadenylation complex, one of two cytoplasmic mRNA deadenylases involved in mRNA turnover. PAN specifically shortens poly(A) tails of RNA and the activity is stimulated by poly(A)-binding protein PAB1. PAN deadenylation is followed by rapid degradation of the shortened mRNA tails by the CCR4-NOT complex. Deadenylated mRNAs are then degraded by two alternative mechanisms, namely exosome-mediated 3'-5' exonucleolytic degradation, or deadenylation-dependent mRNA decaping and subsequent 5'-3' exonucleolytic degradation by XRN1. May also be involved in post-transcriptional maturation of mRNA poly(A) tails. This is PAN2-PAN3 deadenylation complex catalytic subunit PAN2 from Candida albicans (strain SC5314 / ATCC MYA-2876) (Yeast).